We begin with the raw amino-acid sequence, 239 residues long: Venom nerve growth factor (239 aa).

Residues 1-18 (MSMLCYTLIIAFLIGIWA) form the signal peptide. Residues 19–125 (APKSEDNVPL…ALNRNIQAKR (107 aa)) constitute a propeptide that is removed on maturation. A compositionally biased stretch (basic and acidic residues) spans 47–66 (GLKTSRNTDQRHPAPKKADD). A disordered region spans residues 47–68 (GLKTSRNTDQRHPAPKKADDQE). 3 disulfide bridges follow: Cys139/Cys203, Cys181/Cys231, and Cys191/Cys233.

This sequence belongs to the NGF-beta family. As to quaternary structure, homodimer; non-covalently linked. In terms of tissue distribution, expressed by the venom gland.

It is found in the secreted. Its function is as follows. Nerve growth factor is important for the development and maintenance of the sympathetic and sensory nervous systems. It stimulates division and differentiation of sympathetic and embryonic sensory neurons as well as basal forebrain cholinergic neurons in the brain. Its relevance in the snake venom is not clear. However, it has been shown to inhibit metalloproteinase-dependent proteolysis of platelet glycoprotein Ib alpha, suggesting a metalloproteinase inhibition to prevent metalloprotease autodigestion and/or protection against prey proteases. Binds a lipid between the two protein chains in the homodimer. The lipid-bound form promotes histamine relase from mouse mast cells, contrary to the lipid-free form. This Pseudechis porphyriacus (Red-bellied black snake) protein is Venom nerve growth factor.